Here is a 490-residue protein sequence, read N- to C-terminus: Cysteine--tRNA ligase (490 aa).

Cys-36 provides a ligand contact to Zn(2+). The short motif at 38–48 is the 'HIGH' region element; the sequence is VTVYDYSHIGH. Cys-216, His-241, and Glu-245 together coordinate Zn(2+). A 'KMSKS' region motif is present at residues 278–282; sequence KMSKS. Residue Lys-281 participates in ATP binding.

It belongs to the class-I aminoacyl-tRNA synthetase family. As to quaternary structure, monomer. The cofactor is Zn(2+).

The protein localises to the cytoplasm. It catalyses the reaction tRNA(Cys) + L-cysteine + ATP = L-cysteinyl-tRNA(Cys) + AMP + diphosphate. This chain is Cysteine--tRNA ligase, found in Magnetococcus marinus (strain ATCC BAA-1437 / JCM 17883 / MC-1).